We begin with the raw amino-acid sequence, 482 residues long: MAADQVTISDEPKGGGVTADAAVKAIKAGRNKDVDIAAQIVSDYADQMDGDTWSVEEERKLIRRIDWRLIPTLFVCATLSGLDKTAISAAAVYNIKTDLNLTGAEYSWIGSAPFFGGLLFMGPLAYCLQRVPAVPFFAFNVLCWGILEMSVTMVVSMWYRPEEQPKRNSIILNVVAPIINGFVAWVVGYYKGPYERWKIIFLLVGALTIVTSVVVYFVLPNNPLEAKFLTPREKYIVIQRKAADNTGIESKTFKMEQVWEAIFDIKTWLIWIAIAALQVPNGGLTTFNTLIISGLGFDSLQTSLLAMPPGAMSTLSGIGLSYLAATTRRYRTAIVTVSILLPLFGAVLCYALPRTNLAGQLVGLYILYTYWAPYVTLVSVYQANVAGHTKKITLYAWFYIAWATGNIIGPQTFRADQAPEYTGGTVAMIICYVVAMFAITAYGVVCHLSNKKRAEAIEARTAADHDWLDMTDKENVGFKYTT.

The chain crosses the membrane as a helical span at residues 73–93 (LFVCATLSGLDKTAISAAAVY). An N-linked (GlcNAc...) asparagine glycan is attached at N100. A run of 9 helical transmembrane segments spans residues 108–128 (WIGS…AYCL), 131–151 (VPAV…EMSV), 170–190 (IILN…VGYY), 199–219 (IIFL…YFVL), 304–324 (LLAM…SYLA), 333–353 (AIVT…YALP), 361–381 (LVGL…VSVY), 392–412 (ITLY…GPQT), and 426–446 (VAMI…GVVC).

Belongs to the major facilitator superfamily. Allantoate permease family.

The protein resides in the cell membrane. Functionally, MFS-type transporter; part of the gene cluster that mediates the biosynthesis of communesins, a prominent class of indole alkaloids with great potential as pharmaceuticals. With the MFS transporter cnsO, is most likely responsible for cummunesins secretion and thereby may contribute to intrinsic resistance. The polypeptide is MFS-type transporter cnsL (Penicillium expansum (Blue mold rot fungus)).